A 308-amino-acid polypeptide reads, in one-letter code: Glutaminase (308 aa).

Residues S66, N117, E161, N168, Y192, Y244, and V262 each contribute to the substrate site.

The protein belongs to the glutaminase family. Homotetramer.

It catalyses the reaction L-glutamine + H2O = L-glutamate + NH4(+). The polypeptide is Glutaminase (Salmonella dublin (strain CT_02021853)).